The chain runs to 409 residues: MVPDDVEPMEVDDDGALIVDLNETVEEDEETKKEKKRRKRFREKLKRFDHYSQFSGISIAQIDWPLIQGRSLQRSPLTGQSFNADENIFRIDEWPRETFLQITSTLTFCAGAALLSNEKITLFVFQRTMKTLVAYCNFMYHRAITHNRRQINRIDVHELISRNPLRFHMFLQKFLPHPDINRTHFNNEFLYYFHNLYFQDETCRLLYHDVARYSPIINQQGTRMSLQHQIYYPDVMRNPAFDALWFTSFINPSGYSFSRFHAYRFHEALGMPPLESELIIVLDWLAKLIICDIGYKVLAWRDARGFQGLPDLLSFQMAMLEEGDPLFDLDIDYTAPPTRLFSEPTRFQTYPKFQPRRRIDFPSRFDGFYKKRRLERGLEEIQESFIMNHFPTKPLRTVYVYTHPEERRR.

As to quaternary structure, component of a complex containing fem-1, fem-2 and fem-3. Interacts with fem-1 and fem-2 (via N-terminus). Part of a E3 ubiquitin-protein ligase complex, at least composed of cul-2, elc-1, tra-1, fem-1, fem-2 and fem-3; mediates the ubiquitination and subsequent proteasomal degradation of tra-1. Interacts with sel-10. Interacts with tra-2.

Functionally, required for male development. In XO (male) animals, fem-3 directs male differentiation in all tissues. In XX (hermaphrodite animals), it specifies the first 80 or so germ cells to be sperm. Negatively regulates male development when bound to tra-2. The sequence is that of Sex-determination protein fem-3 from Caenorhabditis briggsae.